The primary structure comprises 359 residues: Alanine racemase (359 aa).

The active-site Proton acceptor; specific for D-alanine is the lysine 34. At lysine 34 the chain carries N6-(pyridoxal phosphate)lysine. Position 129 (arginine 129) interacts with substrate. The Proton acceptor; specific for L-alanine role is filled by tyrosine 254. Residue methionine 302 participates in substrate binding.

The protein belongs to the alanine racemase family. Pyridoxal 5'-phosphate serves as cofactor.

It carries out the reaction L-alanine = D-alanine. The protein operates within amino-acid biosynthesis; D-alanine biosynthesis; D-alanine from L-alanine: step 1/1. Functionally, catalyzes the interconversion of L-alanine and D-alanine. May also act on other amino acids. The protein is Alanine racemase (alr) of Yersinia pestis.